The following is a 250-amino-acid chain: Acetylglutamate kinase (250 aa).

Substrate contacts are provided by residues 41–42 (GG), Arg-63, and Asn-156.

This sequence belongs to the acetylglutamate kinase family. ArgB subfamily.

Its subcellular location is the cytoplasm. It carries out the reaction N-acetyl-L-glutamate + ATP = N-acetyl-L-glutamyl 5-phosphate + ADP. The protein operates within amino-acid biosynthesis; L-arginine biosynthesis; N(2)-acetyl-L-ornithine from L-glutamate: step 2/4. Catalyzes the ATP-dependent phosphorylation of N-acetyl-L-glutamate. This is Acetylglutamate kinase from Listeria monocytogenes serotype 4b (strain F2365).